The chain runs to 191 residues: Fe/S biogenesis protein NfuA (191 aa).

[4Fe-4S] cluster contacts are provided by Cys-149 and Cys-152.

Belongs to the NfuA family. As to quaternary structure, homodimer. [4Fe-4S] cluster serves as cofactor.

Involved in iron-sulfur cluster biogenesis. Binds a 4Fe-4S cluster, can transfer this cluster to apoproteins, and thereby intervenes in the maturation of Fe/S proteins. Could also act as a scaffold/chaperone for damaged Fe/S proteins. This chain is Fe/S biogenesis protein NfuA, found in Cronobacter sakazakii (strain ATCC BAA-894) (Enterobacter sakazakii).